Here is a 6684-residue protein sequence, read N- to C-terminus: MSSKQFKILVNEDYQVNVPSLPIRDVLQEIKYCYRNGFEGYVFVPEYCRDLVDCDRKDHYVIGVLGNGVSDLKPVLLTEPSVMLQGFIVRANCNGVLEDFDLKIARTGRGAIYVDQYMCGADGKPVIEGDFKDYFGDEDIIEFEGEEYHCAWTTVRDEKPLNQQTLFTIQEIQYNLDIPHKLPNCATRHVAPPVKKNSKIVLSEDYKKLYDIFGSPFMGNGDCLSKCFDTLHFIAATLRCPCGSESSGVGDWTGFKTACCGLSGKVKGVTLGDIKPGDAVVTSMSAGKGVKFFANCVLQYAGDVEGVSIWKVIKTFTVDETVCTPGFEGELNDFIKPESKSLVACSVKRAFITGDIDDAVHDCIITGKLDLSTNLFGNVGLLFKKTPWFVQKCGALFVDAWKVVEELCGSLTLTYKQIYEVVASLCTSAFTIVNYKPTFVVPDNRVKDLVDKCVKVLVKAFDVFTQIITIAGIEAKCFVLGAKYLLFNNALVKLVSVKILGKKQKGLECAFFATSLVGATVNVTPKRTETATISLNKVDDVVAPGEGYIVIVGDMAFYKSGEYYFMMSSPNFVLTNNVFKAVKVPSYDIVYDVDNDTKSKMIAKLGSSFEYDGDIDAAIVKVNELLIEFRQQSLCFRAFKDDKSIFVEAYFKKYKMPACLAKHIGLWNIIKKDSCKRGFLNLFNHLNELEDIKETNIQAIKNILCPDPLLDLDYGAIWYNCMPGCSDPSVLGSVQLLIGNGVKVVCDGCKGFANQLSKGYNKLCNAARNDIEIGGIPFSTFKTPTNTFIEMTDAIYSVIEQGKALSFRDADVPVVDNGTISTADWSEPILLEPAEYVKPKNNGNVIVIAGYTFYKDEDEHFYPYGFGKIVQRMYNKMGGGDKTVSFSEEVDVQEIAPVTRVKLEFEFDNEIVTGVLERAIGTRYKFTGTTWEEFEESISEELDAIFDTLANQGVELEGYFIYDTCGGFDIKNPDGIMISQYDINITADEKSEVSASSEEEEVESVEEDPENEIVEASEGAEGTSSQEEVETVEVADITSTEEDVDIVEVSAKDDPWAAAVDVQEAEQFNPSLPPFKTTNLNGKIILKQGDNNCWINACCYQLQAFDFFNNEAWEKFKKGDVMDFVNLCYAATTLARGHSGDAEYLLELMLNDYSTAKIVLAAKCGCGEKEIVLERAVFKLTPLKESFNYGVCGDCMQVNTCRFLSVEGSGVFVHDILSKQTPEAMFVVKPVMHAVYTGTTQNGHYMVDDIEHGYCVDGMGIKPLKKRCYTSTLFINANVMTRAEKPKQEFKVEKVEQQPIVEENKSSIEKEEIQSPKNDDLILPFYKAGKLSFYQGALDVLINFLEPDVIVNAANGDLKHMGGVARAIDVFTGGKLTERSKDYLKKNKSIAPGNAVFFENVIEHLSVLNAVGPRNGDSRVEAKLCNVYKAIAKCEGKILTPLISVGIFNVRLETSLQCLLKTVNDRGLNVFVYTDQERQTIENFFSCSIPVNVTEDNVNHERVSVSFDKTYGEQLKGTVVIKDKDVTNQLPSAFDVGQKVIKAIDIDWQAHYGFRDAAAFSASSHDAYKFEVVTHSNFIVHKQTDNNCWINAICLALQRLKPQWKFPGVRGLWNEFLERKTQGFVHMLYHISGVKKGEPGDAELMLHKLGDLMDNDCEIIVTHTTACDKCAKVEKFVGPVVAAPLAIHGTDETCVHGVSVNVKVTQIKGTVAITSLIGPIIGEVLEATGYICYSGSNRNGHYTYYDNRNGLVVDAEKAYHFNRDLLQVTTAIASNFVVKKPQAEERPKNCAFNKVAASPKIVQEQKLLAIESGANYALTEFGRYADMFFMAGDKILRLLLEVFKYLLVLFMCLRSTKMPKVKVKPPLAFKDFGAKVRTLNYMRQLNKPSVWRYAKLVLLLIAIYNFFYLFVSIPVVHKLTCNGAVQAYKNSSFIKSAVCGNSILCKACLASYDELADFQHLQVTWDFKSDPLWNRLVQLSYFAFLAVFGNNYVRCFLMYFVSQYLNLWLSYFGYVEYSWFLHVVNFESISAEFVIVVIVVKAVLALKHIVFACSNPSCKTCSRTARQTRIPIQVVVNGSMKTVYVHANGTGKFCKKHNFYCKNCDSYGFENTFICDEIVRDLSNSVKQTVYATDRSHQEVTKVECSDGFYRFYVGDEFTSYDYDVKHKKYSSQEVLKSMLLLDDFIVYSPSGSALANVRNACVYFSQLIGKPIKIVNSDLLEDLSVDFKGALFNAKKNVIKNSFNVDVSECKNLDECYRACNLNVSFSTFEMAVNNAHRFGILITDRSFNNFWPSKVKPGSSGVSAMDIGKCMTSDAKIVNAKVLTQRGKSVVWLSQDFAALSSTAQKVLVKTFVEEGVNFSLTFNAVGSDDDLPYERFTESVSPKSGSGFFDVITQLKQIVILVFVFIFICGLCSVYSVATQSYIESAEGYDYMVIKNGIVQPFDDTISCVHNTYKGFGDWFKAKYGFIPTFGKSCPIVVGTVFDLENMRPIPDVPAYVSIVGRSLVFAINAAFGVTNMCYDHTGNAVSKDSYFDTCVFNTACTTLTGLGGTIVYCAKQGLVEGAKLYSDLMPDYYYEHASGNMVKLPAIIRGLGLRFVKTQATTYCRVGECIDSKAGFCFGGDNWFVYDNEFGNGYICGNSVLGFFKNVFKLFNSNMSVVATSGAMLVNIIIACLAIAMCYGVLKFKKIFGDCTFLIVMIIVTLVVNNVSYFVTQNTFFMIIYAIVYYFITRKLAYPGILDAGFIIAYINMAPWYVITAYILVFLYDSLPSLFKLKVSTNLFEGDKFVGNFESAAMGTFVIDMRSYETIVNSTSIARIKSYANSFNKYKYYTGSMGEADYRMACYAHLGKALMDYSVNRTDMLYTPPTVSVNSTLQSGLRKMAQPSGLVEPCIVRVSYGNNVLNGLWLGDEVICPRHVIASDTTRVINYENEMSSVRLHNFSVSKNNVFLGVVSARYKGVNLVLKVNQVNPNTPEHKFKSIKAGESFNILACYEGCPGSVYGVNMRSQGTIKGSFIAGTCGSVGYVLENGILYFVYMHHLELGNGSHVGSNFEGEMYGGYEDQPSMQLEGTNVMSSDNVVAFLYAALINGERWFVTNTSMSLESYNTWAKTNSFTELSSTDAFSMLAAKTGQSVEKLLDSIVRLNKGFGGRTILSYGSLCDEFTPTEVIRQMYGVNLQAGKVKSFFYPIMTAMTILFAFWLEFFMYTPFTWINPTFVSIVLAVTTLISTVFVSGIKHKMLFFMSFVLPSVILVTAHNLFWDFSYYESLQSIVENTNTMFLPVDMQGVMLTVFCFIVFVTYSVRFFTCKQSWFSLAVTTILVIFNMVKIFGTSDEPWTENQIAFCFVNMLTMIVSLTTKDWMVVIASYRIAYYIVVCVMPSAFVSDFGFMKCISIVYMACGYLFCCYYGILYWVNRFTCMTCGVYQFTVSAAELKYMTANNLSAPKNAYDAMILSAKLIGVGGKRNIKISTVQSKLTEMKCTNVVLLGLLSKMHVESNSKEWNYCVGLHNEINLCDDPEIVLEKLLALIAFFLSKHNTCDLSELIESYFENTTILQSVASAYAALPSWIALEKARADLEEAKKNDVSPQILKQLTKAFNIAKSDFEREASVQKKLDKMAEQAAASMYKEARAVDRKSKIVSAMHSLLFGMLKKLDMSSVNTIIDQARNGVLPLSIIPAASATRLVVITPSLEVFSKIRQENNVHYAGAIWTIVEVKDANGSHVHLKEVTAANELNLTWPLSITCERTTKLQNNEIMPGKLKERAVRASATLDGEAFGSGKALMASESGKSFMYAFIASDNNLKYVKWESNNDIIPIELEAPLRFYVDGANGPEVKYLYFVKNLNTLRRGAVLGYIGATVRLQAGKPTEHPSNSSLLTLCAFSPDPAKAYVDAVKRGMQPVNNCVKMLSNGAGNGMAVTNGVEANTQQDSYGGASVCIYCRCHVEHPAIDGLCRYKGKFVQIPTGTQDPIRFCIENEVCVVCGCWLNNGCMCDRTSMQSFTVDQSYLNRVRGSSAARLEPCNGTDPDHVSRAFDIYNKDVACIGKFLKTNCSRFRNLDKHDAYYIVKRCTKTVMDHEQVCYNDLKDSGAVAEHDFFTYKEGRCEFGNVARRNLTKYTMMDLCYAIRNFDEKNCEVLKEILVTVGACTEEFFENKDWFDPVENEAIHEVYAKLGPIVANAMLKCVAFCDAIVEKGYIGVITLDNQDLNGNFYDFGDFVKTAPGFGCACVTSYYSYMMPLMGMTSCLESENFVKSDIYGSDYKQYDLLAYDFTEHKEYLFQKYFKYWDRTYHPNCSDCTSDECIIHCANFNTLFSMTIPMTAFGPLVRKVHIDGVPVVVTAGYHFKQLGIVWNLDVKLDTMKLSMTDLLRFVTDPTLLVASSPALLDQRTVCFSIAALSTGITYQTVKPGHFNKDFYDFITERGFFEEGSELTLKHFFFAQGGEAAMTDFNYYRYNRVTVLDICQAQFVYKIVGKYFECYDGGCINAREVVVTNYDKSAGYPLNKFGKARLYYETLSYEEQDALFALTKRNVLPTMTQMNLKYAISGKARARTVGGVSLLSTMTTRQYHQKHLKSIAATRNATVVIGSTKFYGGWDNMLKNLMRDVDNGCLMGWDYPKCDRALPNMIRMASAMILGSKHVGCCTHNDRFYRLSNELAQVLTEVVHCTGGFYFKPGGTTSGDGTTAYANSAFNIFQAVSANVNKLLGVDSNACNNVTVKSIQRKIYDNCYRSSSIDEEFVVEYFSYLRKHFSMMILSDDGVVCYNKDYADLGYVADINAFKATLYYQNNVFMSTSKCWVEPDLSVGPHEFCSQHTLQIVGPDGDYYLPYPDPSRILSAGVFVDDIVKTDNVIMLERYVSLAIDAYPLTKHPKPAYQKVFYTLLDWVKHLQKNLNAGVLDSFSVTMLEEGQDKFWSEEFYASLYEKSTVLQAAGMCVVCGSQTVLRCGDCLRRPLLCTKCAYDHVMGTKHKFIMSITPYVCSFNGCNVNDVTKLFLGGLSYYCMNHKPQLSFPLCANGNVFGLYKSSAVGSEAVEDFNKLAVSDWTNVEDYKLANNVKESLKIFAAETVKAKEESVKSEYAYAVLKEVIGPKEIVLQWEASKTKPPLNRNSVFTCFQISKDTKIQLGEFVFEQSEYGSDSVYYKSTSTYKLTPGMIFVLTSHNVSPLKAPILVNQEKYNTISKLYPVFNIAEAYNTLVPYYQMIGKQKFTTIQGPPGSGKSHCVIGLGLYYPQARIVYTACSHAAVDALCEKAAKNFNVDRCSRIIPQRIRVDCYTGFKPNNTNAQYLFCTVNALPEASCDIVVVDEVSMCTNYDLSVINSRLSYKHIVYVGDPQQLPAPRTLINKGVLQPQDYNVVTKRMCTLGPDVFLHKCYRCPAEIVKTVSALVYENKFVPVNPESKQCFKMFVKGQVQIESNSSINNKQLEVVKAFLAHNPKWRKAVFISPYNSQNYVARRLLGLQTQTVDSAQGSEYDYVIYTQTSDTQHATNVNRFNVAITRAKVGILCIMCDRTMYENLDFYELKDSKIGLQAKPETCGLFKDCSKSEQYIPPAYATTYMSLSDNFKTSDGLAVNIGTKDVKYANVISYMGFRFEANIPGYHTLFCTRDFAMRNVRAWLGFDVEGAHVCGDNVGTNVPLQLGFSNGVDFVVQTEGCVITEKGNSIEVVKARAPPGEQFAHLIPLMRKGQPWHIVRRRIVQMVCDYFDGLSDILIFVLWAGGLELTTMRYFVKIGRPQKCECGKSATCYSSSQSVYACFKHALGCDYLYNPYCIDIQQWGYTGSLSMNHHEVCNIHRNEHVASGDAIMTRCLAIHDCFVKRVDWSIVYPFIDNEEKINKAGRIVQSHVMKAALKIFNPAAIHDVGNPKGIRCATTPIPWFCYDRDPINNNVRCLDYDYMVHGQMNGLMLFWNCNVDMYPEFSIVCRFDTRTRSKLSLEGCNGGALYVNNHAFHTPAYDRRAFAKLKPMPFFYYDDSNCELVDGQPNYVPLKSNVCITKCNIGGAVCKKHAALYRAYVEDYNIFMQAGFTIWCPQNFDTYMLWHGFVNSKALQSLENVAFNVVKKGAFTGLKGDLPTAVIADKIMVRDGPTDKCIFTNKTSLPTNVAFELYAKRKLGLTPPLTILRNLGVVATYKFVLWDYEAERPFSNFTKQVCSYTDLDSEVVTCFDNSIAGSFERFTTTRDAVLISNNAVKGLSAIKLQYGLLNDLPVSTVGNKPVTWYIYVRKNGEYVEQIDSYYTQGRTFETFKPRSTMEEDFLSMDTTLFIQKYGLEDYGFEHVVFGDVSKTTIGGMHLLISQVRLAKMGLFSVQEFMNNSDSTLKSCCITYADDPSSKNVCTYMDILLDDFVTIIKSLDLNVVSKVVDVIVDCKAWRWMLWCENSHIKTFYPQLQSAEWNPGYSMPTLYKIQRMCLERCNLYNYGAQVKLPDGITTNVVKYTQLCQYLNTTTLCVPHKMRVLHLGAAGASGVAPGSTVLRRWLPDDAILVDNDLRDYVSDADFSVTGDCTSLYIEDKFDLLVSDLYDGSTKSIDGENTSKDGFFTYINGFIKEKLSLGGSVAIKITEFSWNKDLYELIQRFEYWTVFCTSVNTSSSEGFLIGINYLGPYCDKAIVDGNIMHANYIFWRNSTIMALSHNSVLDTPKFKCRCNNALIVNLKEKELNEMVIGLLRKGKLLIRNNGKLLNFGNHFVNTP.

The region spanning 2 to 108 (SSKQFKILVN…DFDLKIARTG (107 aa)) is the CoV Nsp1 globular domain. Positions 111 to 349 (AIYVDQYMCG…KSLVACSVKR (239 aa)) constitute a CoV Nsp2 N-terminal domain. Cysteine 240, cysteine 242, cysteine 259, and cysteine 260 together coordinate Zn(2+). The interval 240 to 260 (CPCGSESSGVGDWTGFKTACC) is C4. Residues 378-773 (NVGLLFKKTP…CNAARNDIEI (396 aa)) form the CoV Nsp2 middle domain. In terms of domain architecture, CoV Nsp2 C-terminal spans 768-879 (RNDIEIGGIP…VQRMYNKMGG (112 aa)). One can recognise a Ubiquitin-like 1 domain in the interval 882 to 983 (KTVSFSEEVD…DGIMISQYDI (102 aa)). A disordered region spans residues 989–1032 (EKSEVSASSEEEEVESVEEDPENEIVEASEGAEGTSSQEEVETV). A compositionally biased stretch (acidic residues) spans 997–1015 (SEEEEVESVEEDPENEIVE). The Peptidase C16 1 domain occupies 1055 to 1299 (PWAAAVDVQE…FKVEKVEQQP (245 aa)). The active-site For PL1-PRO activity is the cysteine 1093. A C4-type 1; degenerate zinc finger spans residues 1164 to 1195 (CGCGEKEIVLERAVFKLTPLKESFNYGVCGDC). Catalysis depends on for PL1-PRO activity residues histidine 1244 and aspartate 1257. Positions 1318 to 1489 (NDDLILPFYK…TIENFFSCSI (172 aa)) constitute a Macro domain. The 57-residue stretch at 1486–1542 (SCSIPVNVTEDNVNHERVSVSFDKTYGEQLKGTVVIKDKDVTNQLPSAFDVGQKVIK) folds into the Ubiquitin-like 2 domain. Residues 1550 to 1803 (AHYGFRDAAA…KVAASPKIVQ (254 aa)) form the Peptidase C16 2 domain. The For PL2-PRO activity role is filled by cysteine 1588. Positions 1667, 1670, 1694, and 1696 each coordinate Zn(2+). Residues 1667-1696 (CDKCAKVEKFVGPVVAAPLAIHGTDETCVH) form a C4-type 2; atypical zinc finger. Catalysis depends on for PL2-PRO activity residues histidine 1741 and aspartate 1754. The helical transmembrane segment at 1896 to 1916 (LVLLLIAIYNFFYLFVSIPVV) threads the bilayer. Positions 1896–2053 (LVLLLIAIYN…LALKHIVFAC (158 aa)) are HD1. Residues 1905-1970 (NFFYLFVSIP…LQVTWDFKSD (66 aa)) form the 3Ecto domain. 2 cysteine pairs are disulfide-bonded: cysteine 1921–cysteine 1948 and cysteine 1939–cysteine 1945. 2 consecutive transmembrane segments (helical) span residues 1995–2015 (CFLMYFVSQYLNLWLSYFGYV) and 2033–2053 (FVIVVIVVKAVLALKHIVFAC). A Y1 region spans residues 2044–2134 (LALKHIVFAC…SVKQTVYATD (91 aa)). A CoV Nsp3 Y domain is found at 2044–2384 (LALKHIVFAC…PYERFTESVS (341 aa)). Residues histidine 2048, cysteine 2053, cysteine 2058, cysteine 2061, cysteine 2094, histidine 2097, cysteine 2101, and cysteine 2104 each coordinate Zn(2+). Positions 2048–2061 (HIVFACSNPSCKTC) are ZF1. Positions 2094 to 2104 (CKKHNFYCKNC) are ZF2. The segment at 2135-2224 (RSHQEVTKVE…IVNSDLLEDL (90 aa)) is Y2. The interval 2135–2384 (RSHQEVTKVE…PYERFTESVS (250 aa)) is coV-Y. The interval 2225–2281 (SVDFKGALFNAKKNVIKNSFNVDVSECKNLDECYRACNLNVSFSTFEMAVNNAHRFG) is Y3. The interval 2282–2384 (ILITDRSFNN…PYERFTESVS (103 aa)) is Y4. 8 consecutive transmembrane segments (helical) span residues 2401-2421 (IVILVFVFIFICGLCSVYSVA), 2467-2487 (YGFIPTFGKSCPIVVGTVFDL), 2497-2517 (PAYVSIVGRSLVFAINAAFGV), 2538-2558 (CVFNTACTTLTGLGGTIVYCA), 2666-2686 (GAMLVNIIIACLAIAMCYGVL), 2695-2715 (CTFLIVMIIVTLVVNNVSYFV), 2721-2741 (FMIIYAIVYYFITRKLAYPGI), and 2746-2766 (FIIAYINMAPWYVITAYILVF). Residues 2401 to 2766 (IVILVFVFIF…YVITAYILVF (366 aa)) form an HD2 region. A Nsp4C domain is found at 2783–2878 (LFEGDKFVGN…PTVSVNSTLQ (96 aa)). The Peptidase C30 domain maps to 2879–3180 (SGLRKMAQPS…IRQMYGVNLQ (302 aa)). Residues histidine 2919 and cysteine 3022 each act as for 3CL-PRO activity in the active site. A run of 8 helical transmembrane segments spans residues 3187 to 3207 (FFYPIMTAMTILFAFWLEFFM), 3217 to 3237 (TFVSIVLAVTTLISTVFVSGI), 3242 to 3262 (LFFMSFVLPSVILVTAHNLFW), 3280 to 3300 (MFLPVDMQGVMLTVFCFIVFV), 3313 to 3333 (WFSLAVTTILVIFNMVKIFGT), 3347 to 3367 (FVNMLTMIVSLTTKDWMVVIA), 3371 to 3391 (IAYYIVVCVMPSAFVSDFGFM), and 3394 to 3414 (ISIVYMACGYLFCCYYGILYW). The segment at 3187–3414 (FFYPIMTAMT…FCCYYGILYW (228 aa)) is HD3. Positions 3475-3557 (SKLTEMKCTN…SYFENTTILQ (83 aa)) constitute a RdRp Nsp7 cofactor domain. Residues 3558 to 3752 (SVASAYAALP…ITCERTTKLQ (195 aa)) enclose the RdRp Nsp8 cofactor domain. The Nsp9 ssRNA-binding domain occupies 3753 to 3863 (NNEIMPGKLK…GYIGATVRLQ (111 aa)). One can recognise an ExoN/MTase coactivator domain in the interval 3864–4004 (AGKPTEHPSN…TSMQSFTVDQ (141 aa)). Zn(2+)-binding residues include cysteine 3937, cysteine 3940, histidine 3946, cysteine 3953, cysteine 3979, cysteine 3982, cysteine 3990, and cysteine 3992. 2 zinc fingers span residues 3937–3953 (CIYCRCHVEHPAIDGLC) and 3979–3992 (CVVCGCWLNNGCMC). The NiRAN domain occupies 4006-4255 (YLNRVRGSSA…ESENFVKSDI (250 aa)). The 99-residue stretch at 4261–4359 (KQYDLLAYDF…WNLDVKLDTM (99 aa)) folds into the Nsp12 Interface domain. The Zn(2+) site is built by histidine 4290, cysteine 4296, cysteine 4301, cysteine 4305, and cysteine 4482. Residues 4360–4927 (KLSMTDLLRF…SLYEKSTVLQ (568 aa)) enclose the Nsp12 RNA-dependent RNA polymerase domain. Residues 4362-4576 (SMTDLLRFVT…HQKHLKSIAA (215 aa)) are rdRp Fingers N-ter. Residues 4577–4615 (TRNATVVIGSTKFYGGWDNMLKNLMRDVDNGCLMGWDYP) are rdRp Palm N-ter. The region spanning 4607–4769 (GCLMGWDYPK…CYNKDYADLG (163 aa)) is the RdRp catalytic domain. Positions 4616–4674 (KCDRALPNMIRMASAMILGSKHVGCCTHNDRFYRLSNELAQVLTEVVHCTGGFYFKPGG) are rdRp Fingers C-ter. Histidine 4637, cysteine 4640, and cysteine 4641 together coordinate Zn(2+). The rdRp Palm C-ter stretch occupies residues 4675 to 4810 (TTSGDGTTAY…SVGPHEFCSQ (136 aa)). Catalysis depends on residues serine 4754, aspartate 4755, and aspartate 4756. Positions 4811–4927 (HTLQIVGPDG…SLYEKSTVLQ (117 aa)) are rdRp Thumb. A CV ZBD domain is found at 4928 to 5040 (AAGMCVVCGS…EDFNKLAVSD (113 aa)). Positions 4932, 4935, 4943, 4946, 4953, 4956, 4960, 4966, 4977, 4982, 4999, and 5002 each coordinate Zn(2+). The (+)RNA virus helicase ATP-binding domain occupies 5175–5366 (NTISKLYPVF…MCTLGPDVFL (192 aa)). 5210 to 5217 (GPPGSGKS) contributes to the ATP binding site. Residues 5367-5536 (HKCYRCPAEI…AKPETCGLFK (170 aa)) form the (+)RNA virus helicase C-terminal domain. The ExoN domain maps to 5598–5812 (LFCTRDFAMR…RCLAIHDCFV (215 aa)). Residues aspartate 5616, glutamate 5618, and glutamate 5717 contribute to the active site. Positions 5733, 5735, 5751, 5754, 5782, 5786, and 5789 each coordinate Zn(2+). Residues histidine 5793 and aspartate 5798 contribute to the active site. A Zn(2+)-binding site is contributed by cysteine 5804. Residues 5821-6042 (YPFIDNEEKI…MLWHGFVNSK (222 aa)) enclose the N7-MTase domain. 5856-5862 (DVGNPKG) lines the S-adenosyl-L-methionine pocket. Positions 5933–5947 (CNGGALYVNNHAFHT) are gpppA-binding. Cysteine 5971, cysteine 5988, cysteine 5999, and histidine 6002 together coordinate Zn(2+). In terms of domain architecture, Nsp15 N-terminal oligomerization spans 6046-6106 (SLENVAFNVV…NVAFELYAKR (61 aa)). Residues 6107 to 6224 (KLGLTPPLTI…IYVRKNGEYV (118 aa)) enclose the AV-Nsp11N/CoV-Nsp15M domain. The region spanning 6241–6381 (KPRSTMEEDF…ENSHIKTFYP (141 aa)) is the NendoU domain. Catalysis depends on residues histidine 6271, histidine 6286, lysine 6327, lysine 6429, aspartate 6513, lysine 6553, and glutamate 6586. Residues 6385 to 6681 (SAEWNPGYSM…KLLNFGNHFV (297 aa)) enclose the Nidovirus-type SAM-dependent 2'-O-MTase domain.

This sequence belongs to the coronaviruses polyprotein 1ab family. In terms of assembly, 3CL-PRO exists as monomer and homodimer. Eight copies of nsp7 and eight copies of nsp8 assemble to form a heterohexadecamer. Nsp9 is a dimer. Nsp10 forms a dodecamer. Requires Mn(2+) as cofactor. Specific enzymatic cleavages in vivo by its own proteases yield mature proteins. 3CL-PRO is autocatalytically processed.

The protein resides in the host membrane. It localises to the host cytoplasm. It is found in the host perinuclear region. The protein localises to the host endoplasmic reticulum-Golgi intermediate compartment. The catalysed reaction is Thiol-dependent hydrolysis of ester, thioester, amide, peptide and isopeptide bonds formed by the C-terminal Gly of ubiquitin (a 76-residue protein attached to proteins as an intracellular targeting signal).. The enzyme catalyses RNA(n) + a ribonucleoside 5'-triphosphate = RNA(n+1) + diphosphate. It catalyses the reaction ATP + H2O = ADP + phosphate + H(+). It carries out the reaction a 5'-end diphospho-ribonucleoside in mRNA + GTP + H(+) = a 5'-end (5'-triphosphoguanosine)-ribonucleoside in mRNA + diphosphate. The catalysed reaction is a 5'-end (N(7)-methyl 5'-triphosphoguanosine)-ribonucleoside in mRNA + S-adenosyl-L-methionine = a 5'-end (N(7)-methyl 5'-triphosphoguanosine)-(2'-O-methyl-ribonucleoside) in mRNA + S-adenosyl-L-homocysteine + H(+). The enzyme catalyses uridylyl-uridylyl-ribonucleotide-RNA = a 3'-end uridylyl-2',3'-cyclophospho-uridine-RNA + a 5'-end dephospho-ribonucleoside-RNA. Its function is as follows. The replicase polyprotein of coronaviruses is a multifunctional protein: it contains the activities necessary for the transcription of negative stranded RNA, leader RNA, subgenomic mRNAs and progeny virion RNA as well as proteinases responsible for the cleavage of the polyprotein into functional products. Non-structural protein 1 inhibits host translation. By suppressing host gene expression, nsp1 facilitates efficient viral gene expression in infected cells and evasion from host immune response. Functionally, the papain-like proteinase 1 (PLP1) and papain-like proteinase 2 (PLP2) are responsible for the cleavages located at the N-terminus of the replicase polyprotein. In addition, PLP2 possesses a deubiquitinating/deISGylating activity and processes both 'Lys-48'- and 'Lys-63'-linked polyubiquitin chains from cellular substrates. PLP2 also antagonizes innate immune induction of type I interferon by blocking the nuclear translocation of host IRF-3. In terms of biological role, responsible for the majority of cleavages as it cleaves the C-terminus of replicase polyprotein at 11 sites. Recognizes substrates containing the core sequence [ILMVF]-Q-|-[SAGC]. Inhibited by the substrate-analog Cbz-Val-Asn-Ser-Thr-Leu-Gln-CMK. Its function is as follows. The helicase which contains a zinc finger structure displays RNA and DNA duplex-unwinding activities with 5' to 3' polarity. ATPase activity is strongly stimulated by poly(U), poly(dT), poly(C), poly(dA), but not by poly(G). The exoribonuclease acts on both ssRNA and dsRNA in a 3' to 5' direction. Functionally, nsp7-nsp8 hexadecamer may possibly confer processivity to the polymerase, maybe by binding to dsRNA or by producing primers utilized by the latter. In terms of biological role, forms a primer, NSP9-pU, which is utilized by the polymerase for the initiation of RNA chains. Interacts with ribosome signal recognition particle RNA (SRP). Together with NSP8, suppress protein integration into the cell membrane, thereby disrupting host immune defenses. Its function is as follows. RNA-directed RNA polymerase that catalyzes the transcription of viral genomic and subgenomic RNAs. Acts in complex with nsp7 and nsp8 to transcribe both the minus and positive strands of genomic RNA. The kinase-like NiRAN domain of NSP12 attaches one or more nucleotides to the amino terminus of NSP9, forming a covalent RNA-protein intermediate that serves as transcription/replication primer. Subgenomic RNAs (sgRNAs) are formed by discontinuous transcription: The polymerase has the ability to pause at transcription-regulating sequences (TRS) and jump to the leader TRS, resulting in a major deletion. This creates a series of subgenomic RNAs that are replicated, transcribed and translated. In addition, Nsp12 is a subunit of the viral RNA capping enzyme that catalyzes the RNA guanylyltransferase reaction for genomic and sub-genomic RNAs. Subsequently, the NiRAN domain transfers RNA to GDP, and forms the core cap structure GpppA-RNA. Plays a role in viral transcription/replication and prevents the simultaneous activation of host cell dsRNA sensors, such as MDA5/IFIH1, OAS, and PKR. Acts by degrading the 5'-polyuridines generated during replication of the poly(A) region of viral genomic and subgenomic RNAs. Catalyzes a two-step reaction in which a 2'3'-cyclic phosphate (2'3'-cP) is first generated by 2'-O transesterification, which is then hydrolyzed to a 3'-phosphate (3'-P). If not degraded, poly(U) RNA would hybridize with poly(A) RNA tails and activate host dsRNA sensors. This chain is Replicase polyprotein 1ab (rep), found in Sus scrofa (Pig).